A 116-amino-acid chain; its full sequence is Iron-sulfur cluster insertion protein ErpA (116 aa).

Cysteine 44, cysteine 108, and cysteine 110 together coordinate iron-sulfur cluster.

It belongs to the HesB/IscA family. Homodimer. The cofactor is iron-sulfur cluster.

Functionally, required for insertion of 4Fe-4S clusters for at least IspG. This is Iron-sulfur cluster insertion protein ErpA from Shewanella piezotolerans (strain WP3 / JCM 13877).